The chain runs to 349 residues: Hydroxymethylglutaryl-CoA synthase (349 aa).

Positions 29 and 30 each coordinate (3S)-3-hydroxy-3-methylglutaryl-CoA. Glu-81 acts as the Proton donor/acceptor in catalysis. Residues Cys-113, Thr-154, Thr-202, and His-235 each contribute to the (3S)-3-hydroxy-3-methylglutaryl-CoA site. Catalysis depends on Cys-113, which acts as the Acyl-thioester intermediate. His-235 serves as the catalytic Proton donor/acceptor. CoA is bound at residue Arg-240. (3S)-3-hydroxy-3-methylglutaryl-CoA is bound by residues Arg-244, Asn-267, and Ser-297.

This sequence belongs to the thiolase-like superfamily. Archaeal HMG-CoA synthase family. Interacts with acetoacetyl-CoA thiolase that catalyzes the precedent step in the pathway and with a DUF35 protein. The acetoacetyl-CoA thiolase/HMG-CoA synthase complex channels the intermediate via a fused CoA-binding site, which allows for efficient coupling of the endergonic thiolase reaction with the exergonic HMGCS reaction.

The catalysed reaction is acetoacetyl-CoA + acetyl-CoA + H2O = (3S)-3-hydroxy-3-methylglutaryl-CoA + CoA + H(+). It functions in the pathway metabolic intermediate biosynthesis; (R)-mevalonate biosynthesis; (R)-mevalonate from acetyl-CoA: step 2/3. Its function is as follows. Catalyzes the condensation of acetyl-CoA with acetoacetyl-CoA to form 3-hydroxy-3-methylglutaryl-CoA (HMG-CoA). Functions in the mevalonate (MVA) pathway leading to isopentenyl diphosphate (IPP), a key precursor for the biosynthesis of isoprenoid compounds that are building blocks of archaeal membrane lipids. This Caldivirga maquilingensis (strain ATCC 700844 / DSM 13496 / JCM 10307 / IC-167) protein is Hydroxymethylglutaryl-CoA synthase.